A 280-amino-acid polypeptide reads, in one-letter code: uncharacterized protein (280 aa).

Disordered regions lie at residues 20 to 41 (DVKKSQQQQQQQPQAPPQQQQQ), 170 to 199 (INSPPPPQEEEKPQLSKKEEPEWLKGKDKA), and 251 to 280 (GNSKPYTSSNATNKPFTTASKSTNSYSFSF). Residues 25–41 (QQQQQQQPQAPPQQQQQ) are compositionally biased toward low complexity. Residues 178–199 (EEEKPQLSKKEEPEWLKGKDKA) show a composition bias toward basic and acidic residues.

This is an uncharacterized protein from Dictyostelium discoideum (Social amoeba).